The chain runs to 534 residues: Probable alpha-galactosidase A (534 aa).

The N-terminal stretch at methionine 1–serine 25 is a signal peptide. A disulfide bridge links cysteine 47 with cysteine 79. 4 N-linked (GlcNAc...) asparagine glycosylation sites follow: asparagine 50, asparagine 88, asparagine 94, and asparagine 124. A disulfide bond links cysteine 127 and cysteine 157. The active-site Nucleophile is aspartate 155. Asparagine 204 carries N-linked (GlcNAc...) asparagine glycosylation. Catalysis depends on aspartate 213, which acts as the Proton donor. The Ricin B-type lectin domain maps to cysteine 413 to leucine 534. The cysteines at positions 430 and 443 are disulfide-linked. An N-linked (GlcNAc...) asparagine glycan is attached at asparagine 444. Cysteine 468 and cysteine 481 are disulfide-bonded.

It belongs to the glycosyl hydrolase 27 family.

The protein localises to the secreted. It catalyses the reaction Hydrolysis of terminal, non-reducing alpha-D-galactose residues in alpha-D-galactosides, including galactose oligosaccharides, galactomannans and galactolipids.. Its function is as follows. Hydrolyzes a variety of simple alpha-D-galactoside as well as more complex molecules such as oligosaccharides and polysaccharides. The sequence is that of Probable alpha-galactosidase A (aglA) from Aspergillus oryzae (strain ATCC 42149 / RIB 40) (Yellow koji mold).